A 161-amino-acid polypeptide reads, in one-letter code: Large ribosomal subunit protein uL23m (161 aa).

The transit peptide at 1–34 (MSKIAGKRLVYFPNITFTLCRGLNLQPKFAVFRV) directs the protein to the mitochondrion.

This sequence belongs to the universal ribosomal protein uL23 family. Component of the mitochondrial large ribosomal subunit (mt-LSU). Mature yeast 74S mitochondrial ribosomes consist of a small (37S) and a large (54S) subunit. The 37S small subunit contains a 15S ribosomal RNA (15S mt-rRNA) and at least 32 different proteins. The 54S large subunit contains a 21S rRNA (21S mt-rRNA) and at least 45 different proteins. uL23m forms the wall of the exit tunnel. Interacts with the C-terminus of OXA1.

It localises to the mitochondrion. In terms of biological role, component of the mitochondrial ribosome (mitoribosome), a dedicated translation machinery responsible for the synthesis of mitochondrial genome-encoded proteins, including at least some of the essential transmembrane subunits of the mitochondrial respiratory chain. The mitoribosomes are attached to the mitochondrial inner membrane and translation products are cotranslationally integrated into the membrane. In Schizosaccharomyces pombe (strain 972 / ATCC 24843) (Fission yeast), this protein is Large ribosomal subunit protein uL23m (mrp20).